Here is a 159-residue protein sequence, read N- to C-terminus: MNIKLITVGKLKEHYLKDGIAEYSKRIARFAKVELIEVPDEKTPEHASQAQNQQIMAKEGERIADKIGSRDYVIVLAIEGKQLPSETFSKKMSDITLSGYSTITFIIGGSLGLDERIKQRADMAISFGLLTLPHQLMRLVLIEQIYRAFMIQQGSPYHK.

S-adenosyl-L-methionine is bound by residues leucine 76, glycine 108, and 127 to 132 (FGLLTL).

The protein belongs to the RNA methyltransferase RlmH family. As to quaternary structure, homodimer.

The protein resides in the cytoplasm. The catalysed reaction is pseudouridine(1915) in 23S rRNA + S-adenosyl-L-methionine = N(3)-methylpseudouridine(1915) in 23S rRNA + S-adenosyl-L-homocysteine + H(+). Functionally, specifically methylates the pseudouridine at position 1915 (m3Psi1915) in 23S rRNA. This is Ribosomal RNA large subunit methyltransferase H from Leuconostoc citreum (strain KM20).